The chain runs to 156 residues: Ribonuclease 1B pancreatic (156 aa).

A signal peptide spans 1–28 (MALDKSVIPLPLLVVVLLVLGWAQPSLG). Substrate contacts are provided by lysine 35 and arginine 38. Histidine 40 serves as the catalytic Proton acceptor. Intrachain disulfides connect cysteine 54/cysteine 112, cysteine 68/cysteine 123, cysteine 86/cysteine 138, and cysteine 93/cysteine 100. The N-linked (GlcNAc...) asparagine glycan is linked to asparagine 62. Substrate contacts are provided by residues 69 to 73 (KSVNT), lysine 94, and arginine 113. A glycan (N-linked (GlcNAc...) asparagine) is linked at asparagine 116. Histidine 147 (proton donor) is an active-site residue.

The protein belongs to the pancreatic ribonuclease family. As to quaternary structure, monomer.

The protein resides in the secreted. It carries out the reaction an [RNA] containing cytidine + H2O = an [RNA]-3'-cytidine-3'-phosphate + a 5'-hydroxy-ribonucleotide-3'-[RNA].. The enzyme catalyses an [RNA] containing uridine + H2O = an [RNA]-3'-uridine-3'-phosphate + a 5'-hydroxy-ribonucleotide-3'-[RNA].. Functionally, endonuclease that catalyzes the cleavage of RNA on the 3' side of pyrimidine nucleotides. Compared to RNASE1 it has lost activity towards dsRNA. In Pygathrix nemaeus (Red-shanked douc langur), this protein is Ribonuclease 1B pancreatic (RNASE1B).